Reading from the N-terminus, the 310-residue chain is Beta-ketoacyl-[acyl-carrier-protein] synthase III (310 aa).

Residues cysteine 116 and histidine 239 contribute to the active site. Residues 240–244 are ACP-binding; the sequence is QANYR. The active site involves asparagine 269.

This sequence belongs to the thiolase-like superfamily. FabH family. In terms of assembly, homodimer.

The protein localises to the cytoplasm. The enzyme catalyses malonyl-[ACP] + acetyl-CoA + H(+) = 3-oxobutanoyl-[ACP] + CO2 + CoA. It functions in the pathway lipid metabolism; fatty acid biosynthesis. Catalyzes the condensation reaction of fatty acid synthesis by the addition to an acyl acceptor of two carbons from malonyl-ACP. Catalyzes the first condensation reaction which initiates fatty acid synthesis and may therefore play a role in governing the total rate of fatty acid production. Possesses both acetoacetyl-ACP synthase and acetyl transacylase activities. Its substrate specificity determines the biosynthesis of branched-chain and/or straight-chain of fatty acids. The polypeptide is Beta-ketoacyl-[acyl-carrier-protein] synthase III (Acholeplasma laidlawii (strain PG-8A)).